Reading from the N-terminus, the 419-residue chain is L-rhamnose isomerase (419 aa).

The Mn(2+) site is built by His262, Asp294, and Asp296.

The protein belongs to the rhamnose isomerase family. Homotetramer. Mn(2+) serves as cofactor.

The protein resides in the cytoplasm. It carries out the reaction L-rhamnopyranose = L-rhamnulose. It functions in the pathway carbohydrate degradation; L-rhamnose degradation; glycerone phosphate from L-rhamnose: step 1/3. Functionally, catalyzes the interconversion of L-rhamnose and L-rhamnulose. This is L-rhamnose isomerase from Salmonella typhimurium (strain LT2 / SGSC1412 / ATCC 700720).